Consider the following 413-residue polypeptide: Alpha-1-antitrypsin-like protein CM55-MS (413 aa).

Positions 1 to 24 are cleaved as a signal peptide; the sequence is MPSSISWGLLLLAALSCLGPGSLA. Position 25 is a pyrrolidone carboxylic acid (Q25). 4 N-linked (GlcNAc...) asparagine glycosylation sites follow: N65, N102, N165, and N266. Residues 368 to 387 are RCL; sequence GATVGGITFMSRPKEVIFDR.

It belongs to the serpin family. In terms of tissue distribution, expressed in liver.

It localises to the secreted. Its function is as follows. Serine protease inhibitor. This chain is Alpha-1-antitrypsin-like protein CM55-MS, found in Tamias sibiricus (Siberian chipmunk).